A 331-amino-acid polypeptide reads, in one-letter code: Biotin synthase (331 aa).

The region spanning 53–272 (NHVETASLLS…LATARVMMPR (220 aa)) is the Radical SAM core domain. [4Fe-4S] cluster is bound by residues C68, C72, and C75. C112, C143, C203, and R276 together coordinate [2Fe-2S] cluster.

It belongs to the radical SAM superfamily. Biotin synthase family. As to quaternary structure, homodimer. Requires [4Fe-4S] cluster as cofactor. The cofactor is [2Fe-2S] cluster.

The catalysed reaction is (4R,5S)-dethiobiotin + (sulfur carrier)-SH + 2 reduced [2Fe-2S]-[ferredoxin] + 2 S-adenosyl-L-methionine = (sulfur carrier)-H + biotin + 2 5'-deoxyadenosine + 2 L-methionine + 2 oxidized [2Fe-2S]-[ferredoxin]. It functions in the pathway cofactor biosynthesis; biotin biosynthesis; biotin from 7,8-diaminononanoate: step 2/2. In terms of biological role, catalyzes the conversion of dethiobiotin (DTB) to biotin by the insertion of a sulfur atom into dethiobiotin via a radical-based mechanism. In Bradyrhizobium diazoefficiens (strain JCM 10833 / BCRC 13528 / IAM 13628 / NBRC 14792 / USDA 110), this protein is Biotin synthase.